Reading from the N-terminus, the 311-residue chain is Glutamyl-Q tRNA(Asp) synthetase (311 aa).

L-glutamate-binding positions include 14–18 (RYAPS) and Glu-50. Positions 17–27 (PSPSGDLHLGN) match the 'HIGH' region motif. Residues Cys-104, Cys-106, Tyr-125, and Cys-129 each coordinate Zn(2+). Positions 186 and 204 each coordinate L-glutamate. Positions 242–246 (RLAKR) match the 'KMSKS' region motif. An ATP-binding site is contributed by Lys-245.

The protein belongs to the class-I aminoacyl-tRNA synthetase family. GluQ subfamily. It depends on Zn(2+) as a cofactor.

Functionally, catalyzes the tRNA-independent activation of glutamate in presence of ATP and the subsequent transfer of glutamate onto a tRNA(Asp). Glutamate is transferred on the 2-amino-5-(4,5-dihydroxy-2-cyclopenten-1-yl) moiety of the queuosine in the wobble position of the QUC anticodon. The protein is Glutamyl-Q tRNA(Asp) synthetase of Nocardia farcinica (strain IFM 10152).